A 310-amino-acid chain; its full sequence is Protoheme IX farnesyltransferase 2 (310 aa).

Helical transmembrane passes span 25 to 45 (PGII…AAKG), 49 to 69 (LVLM…GCAI), 87 to 107 (RVTV…LALG), 120 to 139 (ALAL…VYSL), 145 to 165 (SVYG…VGYC), 176 to 196 (AILL…IAIF), 220 to 240 (LHIV…PLAG), 242 to 262 (TGIA…AMAL), and 277 to 297 (QVFG…ALDF).

Belongs to the UbiA prenyltransferase family. Protoheme IX farnesyltransferase subfamily.

It localises to the cell inner membrane. The catalysed reaction is heme b + (2E,6E)-farnesyl diphosphate + H2O = Fe(II)-heme o + diphosphate. The protein operates within porphyrin-containing compound metabolism; heme O biosynthesis; heme O from protoheme: step 1/1. Its function is as follows. Converts heme B (protoheme IX) to heme O by substitution of the vinyl group on carbon 2 of heme B porphyrin ring with a hydroxyethyl farnesyl side group. This Shewanella baltica (strain OS185) protein is Protoheme IX farnesyltransferase 2.